The chain runs to 289 residues: RNA exonuclease 4 (289 aa).

Residues 1 to 24 (MALSSNWQALLASESNPTSNGKNK) show a composition bias toward polar residues. Residues 1 to 34 (MALSSNWQALLASESNPTSNGKNKQSNRKIRNVK) form a disordered region. Residues 25–34 (QSNRKIRNVK) are compositionally biased toward basic residues. The region spanning 121–273 (YIAMDCEFVG…EDARATMLLY (153 aa)) is the Exonuclease domain.

Belongs to the REXO4 family.

Its subcellular location is the nucleus. Exoribonuclease involved in ribosome biosynthesis. Involved in the processing of ITS1, the internal transcribed spacer localized between the 18S and 5.8S rRNAs. This chain is RNA exonuclease 4 (REX4), found in Saccharomyces cerevisiae (strain ATCC 204508 / S288c) (Baker's yeast).